A 572-amino-acid chain; its full sequence is DBH-like monooxygenase protein 2 homolog (572 aa).

An N-terminal signal peptide occupies residues 1-26 (MGTCLKGNMSVLSLVLFLLSVQQFWA). 4 N-linked (GlcNAc...) asparagine glycosylation sites follow: Asn8, Asn64, Asn187, and Asn203. Over 27-552 (QEDPLLPFSE…SPPEPCVRAC (526 aa)) the chain is Extracellular. The DOMON domain occupies 42-157 (HNVQLKWGFD…LPMKLIYAYG (116 aa)). Tyr207 is a catalytic residue. 2 disulfides stabilise this stretch: Cys209-Cys256 and Cys244-Cys263. The Cu cation site is built by His237 and His238. His301 is a Cu cation binding site. N-linked (GlcNAc...) asparagine glycosylation occurs at Asn306. 2 cysteine pairs are disulfide-bonded: Cys358/Cys472 and Cys435/Cys457. His381 is a catalytic residue. Positions 381, 383, and 456 each coordinate Cu cation. N-linked (GlcNAc...) asparagine glycans are attached at residues Asn468, Asn503, Asn518, and Asn534. The helical transmembrane segment at 553-571 (ATKNLAFMSLFLCLAGMWA) threads the bilayer. Ser572 is a topological domain (cytoplasmic).

Belongs to the copper type II ascorbate-dependent monooxygenase family. Requires Cu(2+) as cofactor.

Its subcellular location is the membrane. The sequence is that of DBH-like monooxygenase protein 2 homolog (moxd2) from Danio rerio (Zebrafish).